Here is a 398-residue protein sequence, read N- to C-terminus: Secreted aspartic protease 2 (398 aa).

Residues 1–18 (MFLKNIFIALAIALLVDA) form the signal peptide. Positions 19–56 (TPTTTKRSAGFVALDFSVVKTPKAFPVTNGQEGKTSKR) are cleaved as a propeptide — activation peptide. Residues 70-384 (YAADITVGSN…DLDDNEISLA (315 aa)) enclose the Peptidase A1 domain. Aspartate 88 is a catalytic residue. 88–90 (DTG) is a binding site for pepstatin A. Residues cysteine 103 and cysteine 115 are joined by a disulfide bond. 141–142 (GD) is a pepstatin A binding site. Residues aspartate 247 and aspartate 270 each contribute to the Zn(2+) site. Residue aspartate 274 is part of the active site. 274 to 278 (DSGTT) contacts pepstatin A. Cysteine 312 and cysteine 350 are disulfide-bonded. N-linked (GlcNAc...) asparagine glycans are attached at residues asparagine 313 and asparagine 321.

The protein belongs to the peptidase A1 family. As to quaternary structure, monomer.

It localises to the secreted. It carries out the reaction Preferential cleavage at the carboxyl of hydrophobic amino acids, but fails to cleave 15-Leu-|-Tyr-16, 16-Tyr-|-Leu-17 and 24-Phe-|-Phe-25 of insulin B chain. Activates trypsinogen, and degrades keratin.. In terms of biological role, secreted aspartic peptidases (SAPs) are a group of ten acidic hydrolases considered as key virulence factors. These enzymes supply the fungus with nutrient amino acids as well as are able to degrade the selected host's proteins involved in the immune defense. Induces host inflammatory cytokine production in a proteolytic activity-independent way. Plays a role in tissue damage during superficial infection. Moreover, acts toward human hemoglobin though limited proteolysis to generate a variety of antimicrobial hemocidins, enabling to compete with the other microorganisms of the same physiological niche using the microbicidal peptides generated from the host protein. Functionally, plays a key role in defense against host by cleaving histatin-5 (Hst 5), a peptide from human saliva that carries out fungicidal activity. The cleavage rate decreases in an order of SAP2 &gt; SAP9 &gt; SAP3 &gt; SAP7 &gt; SAP4 &gt; SAP1 &gt; SAP8. The first cleavage occurs between residues 'Lys-17' and 'His-18' of Hst 5, giving DSHAKRHHGYKRKFHEK and HHSHRGY peptides. Simultaneously, the DSHAKRHHGYKRK peptide is also formed. Further fragmentation by SAP2 results in FHEK and DSHAKRHHGY products. This is Secreted aspartic protease 2 from Candida albicans (Yeast).